The following is a 284-amino-acid chain: MKLGDFEIGLDKPFFLIAGTCVVESEQMTIDTAGKLKEICAKLKIPFIYKSSYDKANRSSGKSFRGLGMDEGLRILSEVKRQLGLHVLTDVHSEHEIEPVASVVDVLQTPAFLCRQTDFIHACARSGKPVNIKKGQFLAPHDMKNVIDKARDAAREAGLSEDRFMACERGVSFGYNNLVSDMRSLAIMRETGAPVVFDATHSVQLPGGQGTSSGGQREFVPVLARAAVATGIAGLFMETHPNPAEAKSDGPNAVPLHRMADLLETLMTLDQAVKRTPFLENDFN.

It belongs to the KdsA family.

Its subcellular location is the cytoplasm. It catalyses the reaction D-arabinose 5-phosphate + phosphoenolpyruvate + H2O = 3-deoxy-alpha-D-manno-2-octulosonate-8-phosphate + phosphate. It functions in the pathway carbohydrate biosynthesis; 3-deoxy-D-manno-octulosonate biosynthesis; 3-deoxy-D-manno-octulosonate from D-ribulose 5-phosphate: step 2/3. It participates in bacterial outer membrane biogenesis; lipopolysaccharide biosynthesis. This is 2-dehydro-3-deoxyphosphooctonate aldolase from Paraburkholderia phymatum (strain DSM 17167 / CIP 108236 / LMG 21445 / STM815) (Burkholderia phymatum).